A 516-amino-acid polypeptide reads, in one-letter code: Putative Rieske 2Fe-2S iron-sulfur protein MT3926 (516 aa).

Residues 429-516 form the Rieske domain; it reads LYTFFKCLTD…RGHQLRSSRP (88 aa). Residues C469, H471, C489, and H492 each coordinate [2Fe-2S] cluster.

It depends on [2Fe-2S] cluster as a cofactor.

The protein is Putative Rieske 2Fe-2S iron-sulfur protein MT3926 of Mycobacterium tuberculosis (strain CDC 1551 / Oshkosh).